The sequence spans 430 residues: Serine--tRNA ligase (430 aa).

Residue 234-236 (TAE) participates in L-serine binding. Residue 265-267 (RRE) coordinates ATP. Glutamate 288 is a binding site for L-serine. 352-355 (EISS) is a binding site for ATP. Position 388 (serine 388) interacts with L-serine.

Belongs to the class-II aminoacyl-tRNA synthetase family. Type-1 seryl-tRNA synthetase subfamily. As to quaternary structure, homodimer. The tRNA molecule binds across the dimer.

Its subcellular location is the cytoplasm. It catalyses the reaction tRNA(Ser) + L-serine + ATP = L-seryl-tRNA(Ser) + AMP + diphosphate + H(+). The catalysed reaction is tRNA(Sec) + L-serine + ATP = L-seryl-tRNA(Sec) + AMP + diphosphate + H(+). It functions in the pathway aminoacyl-tRNA biosynthesis; selenocysteinyl-tRNA(Sec) biosynthesis; L-seryl-tRNA(Sec) from L-serine and tRNA(Sec): step 1/1. In terms of biological role, catalyzes the attachment of serine to tRNA(Ser). Is also able to aminoacylate tRNA(Sec) with serine, to form the misacylated tRNA L-seryl-tRNA(Sec), which will be further converted into selenocysteinyl-tRNA(Sec). This chain is Serine--tRNA ligase, found in Thermosynechococcus vestitus (strain NIES-2133 / IAM M-273 / BP-1).